A 486-amino-acid polypeptide reads, in one-letter code: FAD-dependent oxidoreductase domain-containing protein 1 (486 aa).

The chain crosses the membrane as a helical span at residues 66–86; sequence VVVVGGGVLGLSVAYWLKQLE.

Associates with components of the mitochondrial respiratory chain complex I. The cofactor is FAD.

It is found in the mitochondrion inner membrane. In terms of biological role, required for the assembly of the mitochondrial membrane respiratory chain NADH dehydrogenase (Complex I). Involved in mid-late stages of complex I assembly. The polypeptide is FAD-dependent oxidoreductase domain-containing protein 1 (FOXRED1) (Macaca fascicularis (Crab-eating macaque)).